Reading from the N-terminus, the 293-residue chain is Phosphatidylglycerol--prolipoprotein diacylglyceryl transferase (293 aa).

4 consecutive transmembrane segments (helical) span residues 45–65 (FELR…YFVA), 81–101 (ELIF…YVLF), 115–135 (IWEG…TGFL), and 144–164 (FTFL…QAIG). Arg-165 is a binding site for a 1,2-diacyl-sn-glycero-3-phospho-(1'-sn-glycerol). Transmembrane regions (helical) follow at residues 204-224 (PTFL…SVYF), 231-249 (HGEV…RIVI), and 262-282 (IKAA…GFLI).

This sequence belongs to the Lgt family.

It is found in the cell inner membrane. The catalysed reaction is L-cysteinyl-[prolipoprotein] + a 1,2-diacyl-sn-glycero-3-phospho-(1'-sn-glycerol) = an S-1,2-diacyl-sn-glyceryl-L-cysteinyl-[prolipoprotein] + sn-glycerol 1-phosphate + H(+). It functions in the pathway protein modification; lipoprotein biosynthesis (diacylglyceryl transfer). Its function is as follows. Catalyzes the transfer of the diacylglyceryl group from phosphatidylglycerol to the sulfhydryl group of the N-terminal cysteine of a prolipoprotein, the first step in the formation of mature lipoproteins. The sequence is that of Phosphatidylglycerol--prolipoprotein diacylglyceryl transferase from Thermotoga maritima (strain ATCC 43589 / DSM 3109 / JCM 10099 / NBRC 100826 / MSB8).